Consider the following 420-residue polypeptide: UPF0229 protein LPC_3097 (420 aa).

The interval 83–107 (IAGDRIKRPGGGAGGAGGNASDSGE) is disordered. The segment covering 91–100 (PGGGAGGAGG) has biased composition (gly residues).

It belongs to the UPF0229 family.

The protein is UPF0229 protein LPC_3097 of Legionella pneumophila (strain Corby).